Here is a 91-residue protein sequence, read N- to C-terminus: Acylphosphatase (91 aa).

The 87-residue stretch at 5–91 (RLHAIVEGEV…KGEFTSFDTY (87 aa)) folds into the Acylphosphatase-like domain. Residues Arg20 and Asn38 contribute to the active site.

The protein belongs to the acylphosphatase family.

The catalysed reaction is an acyl phosphate + H2O = a carboxylate + phosphate + H(+). The polypeptide is Acylphosphatase (acyP) (Metallosphaera sedula (strain ATCC 51363 / DSM 5348 / JCM 9185 / NBRC 15509 / TH2)).